The following is a 122-amino-acid chain: MTQSTTEDTLLRLAAVIDSRKGGDPEQSYVSRLFHKGDDAILKKIGEEATEVVLAAKDVRQGGAPSALVGEVADLWFHCLVALSHFDLSPADVIAELERREGMSGIEEKALRKRREREENGG.

This sequence belongs to the PRA-PH family.

It is found in the cytoplasm. The enzyme catalyses 1-(5-phospho-beta-D-ribosyl)-ATP + H2O = 1-(5-phospho-beta-D-ribosyl)-5'-AMP + diphosphate + H(+). It functions in the pathway amino-acid biosynthesis; L-histidine biosynthesis; L-histidine from 5-phospho-alpha-D-ribose 1-diphosphate: step 2/9. This is Phosphoribosyl-ATP pyrophosphatase from Burkholderia mallei (strain NCTC 10247).